The sequence spans 129 residues: MRNDTLNDVINSIKNASRLGRREIIAEPAAKLIGKVLKVMQDYNYIKSFEVIDESRGGKFKIVLNTTINNCGVIKPRFPVKNENLEKYESRYLPAEDFGILILTTTKGVMSNIEARKLGIGGKLLAYVY.

It belongs to the universal ribosomal protein uS8 family. In terms of assembly, part of the 30S ribosomal subunit.

One of the primary rRNA binding proteins, it binds directly to 16S rRNA central domain where it helps coordinate assembly of the platform of the 30S subunit. The protein is Small ribosomal subunit protein uS8 of Thermoplasma volcanium (strain ATCC 51530 / DSM 4299 / JCM 9571 / NBRC 15438 / GSS1).